The following is a 69-amino-acid chain: DNA gyrase inhibitor YacG (69 aa).

Cysteine 13, cysteine 16, cysteine 32, and cysteine 36 together coordinate Zn(2+).

The protein belongs to the DNA gyrase inhibitor YacG family. In terms of assembly, interacts with GyrB. The cofactor is Zn(2+).

Functionally, inhibits all the catalytic activities of DNA gyrase by preventing its interaction with DNA. Acts by binding directly to the C-terminal domain of GyrB, which probably disrupts DNA binding by the gyrase. This Neisseria meningitidis serogroup A / serotype 4A (strain DSM 15465 / Z2491) protein is DNA gyrase inhibitor YacG.